An 812-amino-acid chain; its full sequence is MTGIEQKTPVGGSETGGADGLYAVLPLRDIVVFPHMIVPLFVGREKSIRALEEVMGVDKQILLATQKNAADDDPAPDAIYEIGTIANVLQLLKLPDGTVKVLVEGTARAKISKFTDREDYHEAYAAALQEPEEDAVEIEALARSVVSDFENYVKLNKKISPEVVGAASQIDDYSKLADTVASHLAIKIPEKQEMLSVLSVRERLEKALSFMEAEISVLQVEKRIRSRVKRQMEKTQREYYLNEQMKAIQKELGDSEDGRDEVAEIEERITKTKLSKEAREKALAELKKLRSMSPMSAEATVVRNYLDWLLSIPWGKKSKVKQDLNFAQEVLDAEHFGLGKVKERIVGYLAVQARSTKIKGPILCLVGPPGVGKTSLARSIAKATGREYVRMSLGGVRDEAEIRGHRRTYIGSMPGKVIQSMKKAKKSNPLFLLDEIDKMGQDFRGDPSSAMLEVLDPEQNATFMDHYLEVEYDLSNVMFVTTANTMNIPGPLLDRMEIIRIAGYTEDEKLEIAKRHLLPKAIKDHALQPKEFSVTEDALRNVIRHYTREAGVRSLEREVMTLARKAVTEILKTKKKSVKITDKNLSDYLGVEKFRFGQIDGEDQVGVVTGLAWTEVGGELLTIEGVMMPGKGRMTVTGNLRDVMKESISAAASYVRSRAIDFGIEPPLFDKRDIHVHVPEGATPKDGPSAGIAMVTAIVSVLTGIPVRKDIAMTGEVTLRGRVLPIGGLKEKLLAALRGGIKKVLIPEENAKDLAEIPDNVKNNLEIVPVSRVGEVLKHTLVRQPEPIEWTEQENPTAVPPVEDEAGASLAH.

One can recognise a Lon N-terminal domain in the interval 22–215 (YAVLPLRDIV…KALSFMEAEI (194 aa)). 367–374 (GPPGVGKT) contacts ATP. The region spanning 602 to 783 (EDQVGVVTGL…GEVLKHTLVR (182 aa)) is the Lon proteolytic domain. Residues Ser-689 and Lys-732 contribute to the active site. Positions 787–812 (PIEWTEQENPTAVPPVEDEAGASLAH) are disordered.

This sequence belongs to the peptidase S16 family. As to quaternary structure, homohexamer. Organized in a ring with a central cavity.

The protein resides in the cytoplasm. It catalyses the reaction Hydrolysis of proteins in presence of ATP.. Its function is as follows. ATP-dependent serine protease that mediates the selective degradation of mutant and abnormal proteins as well as certain short-lived regulatory proteins. Required for cellular homeostasis and for survival from DNA damage and developmental changes induced by stress. Degrades polypeptides processively to yield small peptide fragments that are 5 to 10 amino acids long. Binds to DNA in a double-stranded, site-specific manner. This Brucella suis biovar 1 (strain 1330) protein is Lon protease.